The chain runs to 421 residues: Putative B3 domain-containing protein Os08g0333500 (421 aa).

Residues 1–51 constitute a DNA-binding region (TF-B3); sequence MTVELEKIAGSFFISKGWKTFVHRTGLLSGQYIRFQVLTPSKINVLLFDKK. The interval 92 to 121 is disordered; the sequence is SHTSNKETSSDSRTESMTDIPSSSDNSGET. The span at 95 to 107 shows a compositional bias: basic and acidic residues; the sequence is SNKETSSDSRTES. Residues 108 to 121 are compositionally biased toward polar residues; that stretch reads MTDIPSSSDNSGET.

The protein localises to the nucleus. The polypeptide is Putative B3 domain-containing protein Os08g0333500 (Oryza sativa subsp. japonica (Rice)).